We begin with the raw amino-acid sequence, 121 residues long: Urotensin-2 (121 aa).

An N-terminal signal peptide occupies residues 1–19; that stretch reads MSKLVPCLLLLGCLGLLFA. Positions 20–106 are excised as a propeptide; sequence LPVPDSRKEP…HLLARIKKPY (87 aa). Cys-115 and Cys-120 are oxidised to a cystine.

It belongs to the urotensin-2 family.

The protein resides in the secreted. Highly potent vasoconstrictor. The chain is Urotensin-2 (UTS2) from Sus scrofa (Pig).